Reading from the N-terminus, the 105-residue chain is MMLKPSIDTLLDKVPSKYSLVILQAKRAHELEAGATPTQAFKSVKSTLQALEEIESGNVVIHPDPAAKRAAVRARIEAERLAREEEERKIKEQIAKEKEEEGEKI.

The protein belongs to the RNA polymerase subunit omega family. As to quaternary structure, the RNAP catalytic core consists of 2 alpha, 1 beta, 1 beta' and 1 omega subunit. When a sigma factor is associated with the core the holoenzyme is formed, which can initiate transcription.

The enzyme catalyses RNA(n) + a ribonucleoside 5'-triphosphate = RNA(n+1) + diphosphate. Promotes RNA polymerase assembly. Latches the N- and C-terminal regions of the beta' subunit thereby facilitating its interaction with the beta and alpha subunits. This Streptococcus equi subsp. zooepidemicus (strain MGCS10565) protein is DNA-directed RNA polymerase subunit omega.